A 395-amino-acid polypeptide reads, in one-letter code: General transcription factor IIH subunit 2 (395 aa).

Positions 60-236 (HLYVVVDGSR…HYKELLTHHV (177 aa)) constitute a VWFA domain. A Phosphotyrosine modification is found at Tyr-95. Residues 291–308 (CPQCRAKYCELPVECKIC) form a C4-type zinc finger.

The protein belongs to the GTF2H2 family. In terms of assembly, component of the TFIID-containing RNA polymerase II pre-initiation complex that is composed of TBP and at least GTF2A1, GTF2A2, GTF2E1, GTF2E2, GTF2F1, GTF2H2, GTF2H3, GTF2H4, GTF2H5, GTF2B, TCEA1, ERCC2 and ERCC3. Component of the 7-subunit TFIIH core complex composed of XPB/ERCC3, XPD/ERCC2, GTF2H1, GTF2H2, GTF2H3, GTF2H4 and GTF2H5, which is active in NER. The core complex associates with the 3-subunit CDK-activating kinase (CAK) module composed of CCNH/cyclin H, CDK7 and MNAT1 to form the 10-subunit holoenzyme (holo-TFIIH) active in transcription. Interacts with XPB, XPD, GTF2H1 and GTF2H3.

The protein localises to the nucleus. Component of the general transcription and DNA repair factor IIH (TFIIH) core complex, which is involved in general and transcription-coupled nucleotide excision repair (NER) of damaged DNA and, when complexed to CAK, in RNA transcription by RNA polymerase II. In NER, TFIIH acts by opening DNA around the lesion to allow the excision of the damaged oligonucleotide and its replacement by a new DNA fragment. In transcription, TFIIH has an essential role in transcription initiation. When the pre-initiation complex (PIC) has been established, TFIIH is required for promoter opening and promoter escape. Phosphorylation of the C-terminal tail (CTD) of the largest subunit of RNA polymerase II by the kinase module CAK controls the initiation of transcription. The N-terminus of GTF2H2 interacts with and regulates XPD whereas an intact C-terminus is required for a successful escape of RNAP II form the promoter. The sequence is that of General transcription factor IIH subunit 2 (GTF2H2) from Bos taurus (Bovine).